A 1098-amino-acid chain; its full sequence is Probable DNA-directed RNA polymerase (1098 aa).

The span at 1–24 (PIRESVRVSTDRDPDLEDEKREQL) shows a compositional bias: basic and acidic residues. The disordered stretch occupies residues 1-26 (PIRESVRVSTDRDPDLEDEKREQLGE). Catalysis depends on residues aspartate 663, lysine 750, and aspartate 915.

It belongs to the phage and mitochondrial RNA polymerase family.

It is found in the mitochondrion. It catalyses the reaction RNA(n) + a ribonucleoside 5'-triphosphate = RNA(n+1) + diphosphate. Functionally, DNA-dependent RNA polymerase catalyzes the transcription of DNA into RNA using the four ribonucleoside triphosphates as substrates. This is Probable DNA-directed RNA polymerase from Zea mays (Maize).